We begin with the raw amino-acid sequence, 212 residues long: Large ribosomal subunit protein uL3 (212 aa).

Glutamine 153 is modified (N5-methylglutamine).

It belongs to the universal ribosomal protein uL3 family. In terms of assembly, part of the 50S ribosomal subunit. Forms a cluster with proteins L14 and L19. In terms of processing, methylated by PrmB.

In terms of biological role, one of the primary rRNA binding proteins, it binds directly near the 3'-end of the 23S rRNA, where it nucleates assembly of the 50S subunit. The protein is Large ribosomal subunit protein uL3 of Shewanella frigidimarina (strain NCIMB 400).